Reading from the N-terminus, the 314-residue chain is Porphobilinogen deaminase (314 aa).

C241 bears the S-(dipyrrolylmethanemethyl)cysteine mark.

It belongs to the HMBS family. As to quaternary structure, monomer. Dipyrromethane serves as cofactor.

It carries out the reaction 4 porphobilinogen + H2O = hydroxymethylbilane + 4 NH4(+). It functions in the pathway porphyrin-containing compound metabolism; protoporphyrin-IX biosynthesis; coproporphyrinogen-III from 5-aminolevulinate: step 2/4. Its pathway is porphyrin-containing compound metabolism; chlorophyll biosynthesis. Tetrapolymerization of the monopyrrole PBG into the hydroxymethylbilane pre-uroporphyrinogen in several discrete steps. The sequence is that of Porphobilinogen deaminase from Chloroherpeton thalassium (strain ATCC 35110 / GB-78).